Consider the following 186-residue polypeptide: MKDTKEIKRSPPHLLKKFAVCDIPLYDICDYNVTRERCRSLDCCFYRGVCYEKAVPIYVQVFFTLIWFVAGAFIIAVIYRVIQGTKKEKKPLLPEDSQVEILKSPTPELIPEPIPEPIPEPIPEPIREPPPPVKKTESPIEAGCCLWMKSKPAKDQPQKETAAPEPPSNPEVKKVNSGSAVPQAAP.

The Extracellular portion of the chain corresponds to 1 to 56 (MKDTKEIKRSPPHLLKKFAVCDIPLYDICDYNVTRERCRSLDCCFYRGVCYEKAVP). The helical transmembrane segment at 57-77 (IYVQVFFTLIWFVAGAFIIAV) threads the bilayer. Topologically, residues 78 to 151 (IYRVIQGTKK…AGCCLWMKSK (74 aa)) are cytoplasmic. 2 disordered regions span residues 104 to 138 (SPTP…KTES) and 151 to 186 (KPAK…QAAP). The segment covering 108–133 (ELIPEPIPEPIPEPIPEPIREPPPPV) has biased composition (pro residues).

It is found in the membrane. In Mus musculus (Mouse), this protein is Testis-expressed protein 29 (Tex29).